The chain runs to 483 residues: Aspartyl/glutamyl-tRNA(Asn/Gln) amidotransferase subunit B (483 aa).

The protein belongs to the GatB/GatE family. GatB subfamily. As to quaternary structure, heterotrimer of A, B and C subunits.

The enzyme catalyses L-glutamyl-tRNA(Gln) + L-glutamine + ATP + H2O = L-glutaminyl-tRNA(Gln) + L-glutamate + ADP + phosphate + H(+). The catalysed reaction is L-aspartyl-tRNA(Asn) + L-glutamine + ATP + H2O = L-asparaginyl-tRNA(Asn) + L-glutamate + ADP + phosphate + 2 H(+). In terms of biological role, allows the formation of correctly charged Asn-tRNA(Asn) or Gln-tRNA(Gln) through the transamidation of misacylated Asp-tRNA(Asn) or Glu-tRNA(Gln) in organisms which lack either or both of asparaginyl-tRNA or glutaminyl-tRNA synthetases. The reaction takes place in the presence of glutamine and ATP through an activated phospho-Asp-tRNA(Asn) or phospho-Glu-tRNA(Gln). This Lachnospira eligens (strain ATCC 27750 / DSM 3376 / VPI C15-48 / C15-B4) (Eubacterium eligens) protein is Aspartyl/glutamyl-tRNA(Asn/Gln) amidotransferase subunit B.